The primary structure comprises 425 residues: UDP-N-acetylglucosamine 1-carboxyvinyltransferase (425 aa).

Residue Lys-22–Asn-23 participates in phosphoenolpyruvate binding. Arg-98 lines the UDP-N-acetyl-alpha-D-glucosamine pocket. Cys-122 acts as the Proton donor in catalysis. Cys-122 is modified (2-(S-cysteinyl)pyruvic acid O-phosphothioketal). Residues Arg-127–Gln-131, Asp-313, and Ile-335 contribute to the UDP-N-acetyl-alpha-D-glucosamine site.

Belongs to the EPSP synthase family. MurA subfamily.

The protein localises to the cytoplasm. It catalyses the reaction phosphoenolpyruvate + UDP-N-acetyl-alpha-D-glucosamine = UDP-N-acetyl-3-O-(1-carboxyvinyl)-alpha-D-glucosamine + phosphate. It functions in the pathway cell wall biogenesis; peptidoglycan biosynthesis. Cell wall formation. Adds enolpyruvyl to UDP-N-acetylglucosamine. This Xylella fastidiosa (strain 9a5c) protein is UDP-N-acetylglucosamine 1-carboxyvinyltransferase.